Reading from the N-terminus, the 293-residue chain is 4-diphosphocytidyl-2-C-methyl-D-erythritol kinase (293 aa).

Lys16 is an active-site residue. Residue 99–109 participates in ATP binding; sequence PMGAGLGGGSS. Asp141 is an active-site residue.

This sequence belongs to the GHMP kinase family. IspE subfamily.

The enzyme catalyses 4-CDP-2-C-methyl-D-erythritol + ATP = 4-CDP-2-C-methyl-D-erythritol 2-phosphate + ADP + H(+). The protein operates within isoprenoid biosynthesis; isopentenyl diphosphate biosynthesis via DXP pathway; isopentenyl diphosphate from 1-deoxy-D-xylulose 5-phosphate: step 3/6. Functionally, catalyzes the phosphorylation of the position 2 hydroxy group of 4-diphosphocytidyl-2C-methyl-D-erythritol. The chain is 4-diphosphocytidyl-2-C-methyl-D-erythritol kinase from Paraburkholderia phymatum (strain DSM 17167 / CIP 108236 / LMG 21445 / STM815) (Burkholderia phymatum).